A 593-amino-acid chain; its full sequence is Copine-5 (593 aa).

The 133-residue stretch at 2–134 (EQPEDMASLS…SPGSRLEKPL (133 aa)) folds into the C2 1 domain. At Ser-19 the chain carries Phosphoserine. The Ca(2+) site is built by Asp-38, Asp-44, Asp-98, Asp-100, Ser-103, Lys-108, and Asp-110. Ser-103 is subject to Phosphoserine. Ser-140 carries the post-translational modification Phosphoserine. Positions 161-284 (KCGTIILSAE…ARGQSQFNIY (124 aa)) constitute a C2 2 domain. Positions 192, 198, 254, 256, and 262 each coordinate Ca(2+). The VWFA domain occupies 328 to 554 (NFTVAIDFTA…DVLAEIPDQL (227 aa)). The segment at 562–593 (GIRPRPPPAAPTHSPSQSPARTPPASPLHTHI) is disordered. The segment covering 572-581 (PTHSPSQSPA) has biased composition (low complexity).

This sequence belongs to the copine family. It depends on Ca(2+) as a cofactor. In terms of tissue distribution, expressed in the brain, heart, stomach, spleen, lymph node and testis. Expressed in melanocytes.

It is found in the perikaryon. It localises to the cell projection. Probable calcium-dependent phospholipid-binding protein that may play a role in calcium-mediated intracellular processes. Plays a role in dendrite formation by melanocytes. The protein is Copine-5 of Homo sapiens (Human).